The primary structure comprises 699 residues: (E2-independent) E3 ubiquitin-conjugating enzyme FATS (699 aa).

Residues 48–116 are required for interaction with p53/TP53; the sequence is MISSIVISQM…LGIPAPSDER (69 aa). Disordered regions lie at residues 107-134, 443-473, and 528-569; these read LGIP…GGPR, KPTR…ERRH, and KSED…PARS. Composition is skewed to basic and acidic residues over residues 113–129 and 460–473; these read SDER…EERP and CLSR…ERRH. Residues 116–224 are required for interaction with HDAC1; sequence RGPEAELPPK…GLCERRKYWV (109 aa). Over residues 534–545 the composition is skewed to pro residues; it reads TPEPSPAAPSPA. The interval 571 to 699 is ALMS motif; the sequence is TLQEALEVRK…LDQLLQRNAV (129 aa).

Interacts with HDAC1; the interaction prevents binding of HDAC1 to CDKN1A/p21 and facilitates the acetylation and stabilization of CDKN1A/p21. Interacts with p53/TP53; the interaction inhibits binding of p53/TP53 and MDM2.

It is found in the cytoplasm. The protein localises to the cytoskeleton. Its subcellular location is the microtubule organizing center. The protein resides in the centrosome. Tumor suppressor that is required to sustain G2/M checkpoint after DNA damage. Acts as a p53/TP53 activator by inhibiting MDM2 binding to p53/TP53 and stimulating non-proteolytic polyubiquitination of p53/TP53. Exhibits ubiquitin ligase (E3) activity and assemble ubiquitin polymers through 'Lys-11'- (K11-), 'Lys-29'- (K29-) and 'Lys-63'- (K63)-linkages, independently of the ubiquitin-conjugating enzyme (E2). Promotes p53/TP53-dependent transcription of CDKN1A/p21, leading to robust checkpoint response. Mediates CDKN1A/p21 protein stability in a ubiquitin-independent manner. Interacts with HDAC1 and prevents binding of HDAC1 to CDKN1A/p21 and facilitates the acetylation and stabilization of CDKN1A/p21. May have a role in the assembly of primary cilia. The polypeptide is (E2-independent) E3 ubiquitin-conjugating enzyme FATS (Homo sapiens (Human)).